The primary structure comprises 62 residues: Large ribosomal subunit protein bL28 (62 aa).

The tract at residues 1–28 is disordered; that stretch reads MARVCAITGRKARSGNSRSHAMNATKRK.

It belongs to the bacterial ribosomal protein bL28 family.

The protein is Large ribosomal subunit protein bL28 of Bacillus thuringiensis (strain Al Hakam).